A 439-amino-acid chain; its full sequence is Proline--tRNA ligase (439 aa).

The protein belongs to the class-II aminoacyl-tRNA synthetase family. ProS type 2 subfamily. In terms of assembly, homodimer.

It localises to the cytoplasm. The enzyme catalyses tRNA(Pro) + L-proline + ATP = L-prolyl-tRNA(Pro) + AMP + diphosphate. Catalyzes the attachment of proline to tRNA(Pro) in a two-step reaction: proline is first activated by ATP to form Pro-AMP and then transferred to the acceptor end of tRNA(Pro). In Phenylobacterium zucineum (strain HLK1), this protein is Proline--tRNA ligase.